The primary structure comprises 380 residues: 3-dehydroquinate synthase (380 aa).

The protein belongs to the archaeal-type DHQ synthase family.

The catalysed reaction is 2-amino-2,3,7-trideoxy-D-lyxo-hept-6-ulosonate + NAD(+) + H2O = 3-dehydroquinate + NH4(+) + NADH + H(+). Functionally, catalyzes the oxidative deamination and cyclization of 2-amino-3,7-dideoxy-D-threo-hept-6-ulosonic acid (ADH) to yield 3-dehydroquinate (DHQ), which is fed into the canonical shikimic pathway of aromatic amino acid biosynthesis. In Methanosarcina acetivorans (strain ATCC 35395 / DSM 2834 / JCM 12185 / C2A), this protein is 3-dehydroquinate synthase.